A 619-amino-acid chain; its full sequence is MLKAQIQTGLQLLQRAAVSHMRPSSCTSMLMRMRVHLAPRALQSQRSLSSSEFSPLIADAILPKCSSCGVLLQNEDRSKPGFYLAPGSSRDFRKETDVVYEKHLASLEEADRDLLLNGAQGLQVSGQKETPKSQKQPANKVSCIRCRDSHYRSQFPLDQFAVAAVSDVMHSIPAYANLAYVVSATDFPMSINEDVFRHRSPREMQFVVTKNDLFFQKNSVASKYGLQFYQDYFWRMFNVPVENVHCVSGTVDWNTEKLFDSLRDNTYFIGCVNSGKSTLIQSLVHLAHKRRLALPNAKRDRALQKIDNQVISTQQEPKTRQALIKHNRALASAFKKQNGPGASYMPGFTRGNLPFELSRSVTIYDVPGFSSAQTAQLYDFLAPQAIKALHKGQKVYKAGTYKSHYETLKSGQVLTVGGLFFLQAPKNTMFQVKNLISHPHHIFKDMEKAMDVWRSPEIYPALKNVFVVPGTRNNAPTPLVKHIVPSFYGSIDLVLRYLGYVSLKPTGAKDPESGPLVVYLPKEVDAIIRQPITKYISRTLSGRDANGNVLRKENWVQKSVTEVKRYTGKTPFTSRLIPAVGEDASADEAEVMERCVEKIKGHAVAHAQISEETKYANWL.

The transit peptide at 1 to 55 (MLKAQIQTGLQLLQRAAVSHMRPSSCTSMLMRMRVHLAPRALQSQRSLSSSEFSP) directs the protein to the mitochondrion. Positions 162 to 372 (VAAVSDVMHS…IYDVPGFSSA (211 aa)) constitute a CP-type G domain.

It belongs to the TRAFAC class YlqF/YawG GTPase family. GEP3 subfamily.

The protein localises to the mitochondrion. May be involved in the mitochondrial lipid metabolism. In Clavispora lusitaniae (strain ATCC 42720) (Yeast), this protein is Genetic interactor of prohibitins 3, mitochondrial (GEP3).